The primary structure comprises 239 residues: Purine nucleoside phosphorylase DeoD-type (239 aa).

Position 5 (histidine 5) interacts with a purine D-ribonucleoside. Phosphate is bound by residues glycine 21, arginine 25, arginine 44, and 88–91; that span reads RVGS. A purine D-ribonucleoside is bound by residues 180–182 and 204–205; these read EME and SD. Aspartate 205 (proton donor) is an active-site residue.

It belongs to the PNP/UDP phosphorylase family. Homohexamer; trimer of homodimers.

The enzyme catalyses a purine D-ribonucleoside + phosphate = a purine nucleobase + alpha-D-ribose 1-phosphate. The catalysed reaction is a purine 2'-deoxy-D-ribonucleoside + phosphate = a purine nucleobase + 2-deoxy-alpha-D-ribose 1-phosphate. In terms of biological role, catalyzes the reversible phosphorolytic breakdown of the N-glycosidic bond in the beta-(deoxy)ribonucleoside molecules, with the formation of the corresponding free purine bases and pentose-1-phosphate. The chain is Purine nucleoside phosphorylase DeoD-type from Klebsiella pneumoniae (strain 342).